The primary structure comprises 378 residues: UPF0754 membrane protein Exig_0680 (378 aa).

2 helical membrane passes run 5-25 and 357-377; these read VDLV…GAVT and ITWL…ILLI.

The protein belongs to the UPF0754 family.

The protein localises to the cell membrane. This chain is UPF0754 membrane protein Exig_0680, found in Exiguobacterium sibiricum (strain DSM 17290 / CCUG 55495 / CIP 109462 / JCM 13490 / 255-15).